A 272-amino-acid chain; its full sequence is Orotidine 5'-phosphate decarboxylase (272 aa).

K95 functions as the Proton donor in the catalytic mechanism.

The protein belongs to the OMP decarboxylase family. Type 2 subfamily.

The catalysed reaction is orotidine 5'-phosphate + H(+) = UMP + CO2. It functions in the pathway pyrimidine metabolism; UMP biosynthesis via de novo pathway; UMP from orotate: step 2/2. This is Orotidine 5'-phosphate decarboxylase from Cupriavidus necator (strain ATCC 17699 / DSM 428 / KCTC 22496 / NCIMB 10442 / H16 / Stanier 337) (Ralstonia eutropha).